We begin with the raw amino-acid sequence, 100 residues long: UPF0125 protein CV_3462 (100 aa).

It belongs to the UPF0125 (RnfH) family.

The polypeptide is UPF0125 protein CV_3462 (Chromobacterium violaceum (strain ATCC 12472 / DSM 30191 / JCM 1249 / CCUG 213 / NBRC 12614 / NCIMB 9131 / NCTC 9757 / MK)).